Consider the following 1125-residue polypeptide: Angiopoietin-1 receptor (1125 aa).

A signal peptide spans methionine 1 to glycine 22. Topologically, residues alanine 23–leucine 748 are extracellular. Cysteine 44 and cysteine 102 are disulfide-bonded. The Ig-like C2-type 1 domain occupies cysteine 44–serine 123. The N-linked (GlcNAc...) asparagine glycan is linked to asparagine 158. 3 consecutive EGF-like domains span residues arginine 210–glutamate 252, alanine 254–asparagine 299, and alanine 301–glutamate 341. Disulfide bonds link cysteine 211-cysteine 220, cysteine 224-cysteine 233, cysteine 227-cysteine 240, cysteine 242-cysteine 251, cysteine 255-cysteine 264, cysteine 268-cysteine 274, cysteine 280-cysteine 287, cysteine 289-cysteine 298, cysteine 302-cysteine 311, cysteine 315-cysteine 323, cysteine 317-cysteine 329, cysteine 331-cysteine 340, and cysteine 370-cysteine 424. Residues proline 350 to serine 440 enclose the Ig-like C2-type 2 domain. Fibronectin type-III domains are found at residues proline 447 to isoleucine 541, proline 545 to aspartate 637, and glutamine 642 to glutamate 735. A helical transmembrane segment spans residues leucine 749 to isoleucine 769. Residues methionine 770–alanine 1125 are Cytoplasmic-facing. In terms of domain architecture, Protein kinase spans isoleucine 825–leucine 1097. Residues isoleucine 831–valine 839 and lysine 856 contribute to the ATP site. At tyrosine 861 the chain carries Phosphotyrosine; by autocatalysis. The Proton acceptor role is filled by aspartate 965. A phosphotyrosine; by autocatalysis mark is found at tyrosine 993, tyrosine 1103, and tyrosine 1109.

It belongs to the protein kinase superfamily. Tyr protein kinase family. Tie subfamily. As to quaternary structure, homodimer. Heterodimer with TIE1. Interacts with ANGPT1, ANGPT2 and ANGPT4. At cell-cell contacts in quiescent cells, forms a signaling complex composed of ANGPT1 plus TEK molecules from two adjoining cells. In the absence of endothelial cell-cell contacts, interaction with ANGPT1 mediates contacts with the extracellular matrix. Interacts (tyrosine phosphorylated) with TNIP2. Interacts (tyrosine phosphorylated) with SHC1 (via SH2 domain). Interacts with PTPRB; this promotes endothelial cell-cell adhesion. Interacts with DOK2, GRB2, GRB7, GRB14, PIK3R1 and PTPN11/SHP2. Colocalizes with DOK2 at contacts with the extracellular matrix in migrating cells. In terms of processing, proteolytic processing leads to the shedding of the extracellular domain (soluble TIE-2 alias sTIE-2). Post-translationally, autophosphorylated on tyrosine residues in response to ligand binding. Autophosphorylation occurs in trans, i.e. one subunit of the dimeric receptor phosphorylates tyrosine residues on the other subunit. Autophosphorylation occurs in a sequential manner, where Tyr-993 in the kinase activation loop is phosphorylated first, followed by autophosphorylation at Tyr-1109 and at additional tyrosine residues. ANGPT1-induced phosphorylation is impaired during hypoxia, due to increased expression of ANGPT2. Phosphorylation is important for interaction with GRB14, PIK3R1 and PTPN11. Phosphorylation at Tyr-1103 is important for interaction with GRB2 and GRB7. Phosphorylation at Tyr-1109 is important for interaction with DOK2 and for coupling to downstream signal transduction pathways in endothelial cells. Dephosphorylated by PTPRB. Ubiquitinated. The phosphorylated receptor is ubiquitinated and internalized, leading to its degradation. Specifically expressed in developing vascular endothelial cells.

It is found in the cell membrane. Its subcellular location is the cell junction. The protein resides in the focal adhesion. The protein localises to the cytoplasm. It localises to the cytoskeleton. It is found in the secreted. It carries out the reaction L-tyrosyl-[protein] + ATP = O-phospho-L-tyrosyl-[protein] + ADP + H(+). Angiopoietin binding leads to receptor dimerization and activation by autophosphorylation at Tyr-993 on the kinase activation loop. In terms of biological role, tyrosine-protein kinase that acts as a cell-surface receptor for ANGPT1, ANGPT2 and ANGPT4 and regulates angiogenesis, endothelial cell survival, proliferation, migration, adhesion and cell spreading, reorganization of the actin cytoskeleton, but also maintenance of vascular quiescence. Has anti-inflammatory effects by preventing the leakage of pro-inflammatory plasma proteins and leukocytes from blood vessels. Required for normal angiogenesis and heart development during embryogenesis. Required for post-natal hematopoiesis. After birth, activates or inhibits angiogenesis, depending on the context. Inhibits angiogenesis and promotes vascular stability in quiescent vessels, where endothelial cells have tight contacts. In quiescent vessels, ANGPT1 oligomers recruit TEK to cell-cell contacts, forming complexes with TEK molecules from adjoining cells, and this leads to preferential activation of phosphatidylinositol 3-kinase and the AKT1 signaling cascades. In migrating endothelial cells that lack cell-cell adhesions, ANGT1 recruits TEK to contacts with the extracellular matrix, leading to the formation of focal adhesion complexes, activation of PTK2/FAK and of the downstream kinases MAPK1/ERK2 and MAPK3/ERK1, and ultimately to the stimulation of sprouting angiogenesis. ANGPT1 signaling triggers receptor dimerization and autophosphorylation at specific tyrosine residues that then serve as binding sites for scaffold proteins and effectors. Signaling is modulated by ANGPT2 that has lower affinity for TEK, can promote TEK autophosphorylation in the absence of ANGPT1, but inhibits ANGPT1-mediated signaling by competing for the same binding site. Signaling is also modulated by formation of heterodimers with TIE1, and by proteolytic processing that gives rise to a soluble TEK extracellular domain. The soluble extracellular domain modulates signaling by functioning as decoy receptor for angiopoietins. TEK phosphorylates DOK2, GRB7, GRB14, PIK3R1, SHC1 and TIE1. This Bos taurus (Bovine) protein is Angiopoietin-1 receptor (TEK).